A 303-amino-acid polypeptide reads, in one-letter code: Protoheme IX farnesyltransferase (303 aa).

The next 9 membrane-spanning stretches (helical) occupy residues 30–50 (VMSL…STVS), 54–74 (AMIA…LNMW), 101–121 (ALIF…YFAN), 123–143 (ISAV…TIWL), 150–170 (NIVI…TIAT), 178–198 (ITFF…LSLY), 219–241 (STKI…PYAI), 245–262 (GLVF…YNIL), and 279–299 (AKTI…IFLI).

It belongs to the UbiA prenyltransferase family. Protoheme IX farnesyltransferase subfamily.

It is found in the cell inner membrane. It carries out the reaction heme b + (2E,6E)-farnesyl diphosphate + H2O = Fe(II)-heme o + diphosphate. Its pathway is porphyrin-containing compound metabolism; heme O biosynthesis; heme O from protoheme: step 1/1. In terms of biological role, converts heme B (protoheme IX) to heme O by substitution of the vinyl group on carbon 2 of heme B porphyrin ring with a hydroxyethyl farnesyl side group. This chain is Protoheme IX farnesyltransferase, found in Pelagibacter ubique (strain HTCC1062).